Reading from the N-terminus, the 492-residue chain is Glutamyl-tRNA(Gln) amidotransferase subunit B, mitochondrial (492 aa).

It belongs to the GatB/GatE family. GatB subfamily. As to quaternary structure, subunit of the heterotrimeric GatFAB amidotransferase (AdT) complex, composed of A, B and F subunits.

Its subcellular location is the mitochondrion. It carries out the reaction L-glutamyl-tRNA(Gln) + L-glutamine + ATP + H2O = L-glutaminyl-tRNA(Gln) + L-glutamate + ADP + phosphate + H(+). Allows the formation of correctly charged Gln-tRNA(Gln) through the transamidation of misacylated Glu-tRNA(Gln) in the mitochondria. The reaction takes place in the presence of glutamine and ATP through an activated gamma-phospho-Glu-tRNA(Gln). The sequence is that of Glutamyl-tRNA(Gln) amidotransferase subunit B, mitochondrial from Komagataella phaffii (strain GS115 / ATCC 20864) (Yeast).